We begin with the raw amino-acid sequence, 112 residues long: Large ribosomal subunit protein uL18 (112 aa).

This sequence belongs to the universal ribosomal protein uL18 family. Part of the 50S ribosomal subunit; part of the 5S rRNA/L5/L18/L25 subcomplex. Contacts the 5S and 23S rRNAs.

In terms of biological role, this is one of the proteins that bind and probably mediate the attachment of the 5S RNA into the large ribosomal subunit, where it forms part of the central protuberance. The protein is Large ribosomal subunit protein uL18 of Thermus thermophilus (strain ATCC BAA-163 / DSM 7039 / HB27).